A 397-amino-acid polypeptide reads, in one-letter code: Purine ribonucleoside efflux pump NepI (397 aa).

Over 1-21 (MNENIAEKFRADGVARPNWSA) the chain is Cytoplasmic. A helical membrane pass occupies residues 22–42 (VFAVAFCVACLITVEFLPVSL). Over 43–54 (LTPMAQDLGISE) the chain is Periplasmic. The helical transmembrane segment at 55 to 75 (GIAGQSVTVTAFVAMFSSLFI) threads the bilayer. Residues 76-85 (TQIIQATDRR) are Cytoplasmic-facing. Residues 86 to 106 (YIVILFAVLLTASCLMVSFAN) traverse the membrane as a helical segment. Ser-107 is a topological domain (periplasmic). A helical transmembrane segment spans residues 108-128 (FTLLLLGRACLGLALGGFWAM). The Cytoplasmic portion of the chain corresponds to 129 to 147 (SASLTMRLVPARTVPKALS). A helical membrane pass occupies residues 148 to 168 (VIFGAVSIALVIAAPLGSFLG). The Periplasmic segment spans residues 169 to 175 (GIIGWRN). Residues 176–196 (VFNAAAVMGVLCVIWVVKSLP) form a helical membrane-spanning segment. The Cytoplasmic portion of the chain corresponds to 197 to 215 (SLPGEPSHQKQNMFSLLQR). Residues 216-236 (PGVMAGMIAIFMSFAGQFAFF) traverse the membrane as a helical segment. Topologically, residues 237–255 (TYIRPVYMNLAGFDVDGLT) are periplasmic. Residues 256–276 (LVLLSFGIASFVGTSFSSYVL) form a helical membrane-spanning segment. The Cytoplasmic segment spans residues 277–281 (KRSVK). Residues 282-302 (LALAGAPLLLALSALTLIVWG) traverse the membrane as a helical segment. The Periplasmic segment spans residues 303-305 (SDK). A helical membrane pass occupies residues 306-326 (TVAAVIAIIWGLAFALVPVGW). Topologically, residues 327–343 (STWITRSLADQAEKAGS) are cytoplasmic. Residues 344-364 (IQVAVIQLANTCGAAVGGYAL) traverse the membrane as a helical segment. Topologically, residues 365-366 (DN) are periplasmic. A helical transmembrane segment spans residues 367–387 (FGLLSPLALSGCLMLLTALVV). Topologically, residues 388–397 (AAKVRITPMS) are cytoplasmic.

This sequence belongs to the major facilitator superfamily. DHA1 family. NepI (TC 2.A.1.2.26) subfamily.

The protein localises to the cell inner membrane. The catalysed reaction is inosine(in) + H(+)(out) = inosine(out) + H(+)(in). It catalyses the reaction guanosine(in) + H(+)(out) = guanosine(out) + H(+)(in). In terms of biological role, involved in the efflux of purine ribonucleosides, such as inosine and guanosine. The chain is Purine ribonucleoside efflux pump NepI from Salmonella enteritidis PT4 (strain P125109).